The chain runs to 390 residues: GTPase Obg (390 aa).

Positions 1 to 159 (MKFVDEATIL…RELMLELLLL (159 aa)) constitute an Obg domain. The 174-residue stretch at 160-333 (ADVGMLGLPN…LCWDVMNFLN (174 aa)) folds into the OBG-type G domain. GTP contacts are provided by residues 166–173 (GLPNAGKS), 191–195 (FTTLI), 213–216 (DIPG), 283–286 (NKID), and 314–316 (SAA). Positions 173 and 193 each coordinate Mg(2+). Residues 363–384 (EVEAEAESEDDDDWDEEDDDGV) are compositionally biased toward acidic residues. The segment at 363–390 (EVEAEAESEDDDDWDEEDDDGVEFIYER) is disordered.

Belongs to the TRAFAC class OBG-HflX-like GTPase superfamily. OBG GTPase family. As to quaternary structure, monomer. Mg(2+) serves as cofactor.

It localises to the cytoplasm. In terms of biological role, an essential GTPase which binds GTP, GDP and possibly (p)ppGpp with moderate affinity, with high nucleotide exchange rates and a fairly low GTP hydrolysis rate. Plays a role in control of the cell cycle, stress response, ribosome biogenesis and in those bacteria that undergo differentiation, in morphogenesis control. This chain is GTPase Obg, found in Yersinia enterocolitica serotype O:8 / biotype 1B (strain NCTC 13174 / 8081).